The chain runs to 83 residues: High-potential iron-sulfur protein (83 aa).

[4Fe-4S] cluster contacts are provided by C43, C46, C61, and C75.

Belongs to the high-potential iron-sulfur protein (HiPIP) family. As to quaternary structure, homodimer.

The protein localises to the periplasm. In terms of biological role, specific class of high-redox-potential 4Fe-4S ferredoxins. Functions in anaerobic electron transport in most purple and in some other photosynthetic bacteria and in at least one genus (Paracoccus) of halophilic, denitrifying bacteria. This Isochromatium buderi (Chromatium buderi) protein is High-potential iron-sulfur protein.